The sequence spans 515 residues: ATP-dependent rRNA helicase rrp-3 (515 aa).

Positions Met1 to Val85 are disordered. Over residues Leu15–Pro24 the composition is skewed to low complexity. Over residues Glu25 to Ala55 the composition is skewed to basic and acidic residues. Over residues Thr69 to Val85 the composition is skewed to acidic residues. The short motif at Lys90 to Glu118 is the Q motif element. The Helicase ATP-binding domain maps to Ile121 to Val292. Ala134–Thr141 provides a ligand contact to ATP. The short motif at Asp240–Asp243 is the DEAD box element. In terms of domain architecture, Helicase C-terminal spans His316–Met464. Positions Lys482–Gly515 are disordered. A compositionally biased stretch (basic and acidic residues) spans Gly506–Gly515.

This sequence belongs to the DEAD box helicase family. DDX47/RRP3 subfamily.

It is found in the nucleus. Functionally, required for pre-ribosomal RNA processing. Involved in the maturation of the 35S-pre-rRNA and to its cleavage to mature 18S rRNA. This chain is ATP-dependent rRNA helicase rrp-3 (rrp-3), found in Neurospora crassa (strain ATCC 24698 / 74-OR23-1A / CBS 708.71 / DSM 1257 / FGSC 987).